Here is a 126-residue protein sequence, read N- to C-terminus: MSSTYKDLDKIFLIGAGGFLGAICRFSLCELMESYYGTLSVNVLGSFMLGLIMYDTEYIGFIGPKGKLAFGTGFMGAFTTFSTFAVQSFTMPFFPALENISVNLFLALVGVFMGRSTIKALSGREV.

The next 4 helical transmembrane spans lie at 11–31, 43–63, 69–89, and 93–113; these read IFLI…LCEL, VLGS…GFIG, AFGT…VQSF, and FFPA…GVFM. Na(+) is bound by residues glycine 76 and threonine 79.

This sequence belongs to the fluoride channel Fluc/FEX (TC 1.A.43) family.

Its subcellular location is the cell membrane. It carries out the reaction fluoride(in) = fluoride(out). Its activity is regulated as follows. Na(+) is not transported, but it plays an essential structural role and its presence is essential for fluoride channel function. Fluoride-specific ion channel. Important for reducing fluoride concentration in the cell, thus reducing its toxicity. This is Fluoride-specific ion channel FluC 2 from Methanosarcina barkeri (strain Fusaro / DSM 804).